A 163-amino-acid polypeptide reads, in one-letter code: Anthranilate 1,2-dioxygenase small subunit (163 aa).

Belongs to the bacterial ring-hydroxylating dioxygenase beta subunit family. The anthranilate dioxygenase (AntDO) multicomponent enzyme system is composed of an oxygenase component and a NADH:acceptor reductase component (AntC). The oxygenase component is a heterohexamer of 3 large (AntA) and 3 small (AntB) subunits.

The enzyme catalyses anthranilate + NADH + O2 + 3 H(+) = catechol + NH4(+) + CO2 + NAD(+). The catalysed reaction is anthranilate + NADPH + O2 + 3 H(+) = catechol + NH4(+) + CO2 + NADP(+). The protein operates within aromatic compound metabolism; anthranilate degradation via hydroxylation; catechol from anthranilate: step 1/1. Functionally, component of anthranilate dioxygenase multicomponent enzyme system which catalyzes the incorporation of both atoms of molecular oxygen into anthranilate to form catechol. In Acinetobacter baylyi (strain ATCC 33305 / BD413 / ADP1), this protein is Anthranilate 1,2-dioxygenase small subunit.